We begin with the raw amino-acid sequence, 88 residues long: uncharacterized protein (88 aa).

It belongs to the phD/YefM antitoxin family.

This is an uncharacterized protein from Sinorhizobium fredii (strain NBRC 101917 / NGR234).